We begin with the raw amino-acid sequence, 69 residues long: Cytochrome c oxidase subunit 8A, mitochondrial (69 aa).

Residues 1–25 (MSVLTPLLLRGLTGSARRLPVPRAK) constitute a mitochondrion transit peptide. The SIFI-degron motif lies at 2 to 19 (SVLTPLLLRGLTGSARRL). Over 26–36 (IHSLPPEEKLG) the chain is Mitochondrial matrix. Residues 37-60 (IMELAVGLTSCFVTFLLPAGWILS) form a helical membrane-spanning segment. Residues 61–69 (HLETYRRPE) lie on the Mitochondrial intermembrane side of the membrane.

Belongs to the cytochrome c oxidase VIII family. In terms of assembly, component of the cytochrome c oxidase (complex IV, CIV), a multisubunit enzyme composed of 14 subunits. The complex is composed of a catalytic core of 3 subunits MT-CO1, MT-CO2 and MT-CO3, encoded in the mitochondrial DNA, and 11 supernumerary subunits COX4I, COX5A, COX5B, COX6A, COX6B, COX6C, COX7A, COX7B, COX7C, COX8 and NDUFA4, which are encoded in the nuclear genome. The complex exists as a monomer or a dimer and forms supercomplexes (SCs) in the inner mitochondrial membrane with NADH-ubiquinone oxidoreductase (complex I, CI) and ubiquinol-cytochrome c oxidoreductase (cytochrome b-c1 complex, complex III, CIII), resulting in different assemblies (supercomplex SCI(1)III(2)IV(1) and megacomplex MCI(2)III(2)IV(2)). Post-translationally, in response to mitochondrial stress, the precursor protein is ubiquitinated by the SIFI complex in the cytoplasm before mitochondrial import, leading to its degradation. Within the SIFI complex, UBR4 initiates ubiquitin chain that are further elongated or branched by KCMF1.

It is found in the mitochondrion inner membrane. It functions in the pathway energy metabolism; oxidative phosphorylation. Functionally, component of the cytochrome c oxidase, the last enzyme in the mitochondrial electron transport chain which drives oxidative phosphorylation. The respiratory chain contains 3 multisubunit complexes succinate dehydrogenase (complex II, CII), ubiquinol-cytochrome c oxidoreductase (cytochrome b-c1 complex, complex III, CIII) and cytochrome c oxidase (complex IV, CIV), that cooperate to transfer electrons derived from NADH and succinate to molecular oxygen, creating an electrochemical gradient over the inner membrane that drives transmembrane transport and the ATP synthase. Cytochrome c oxidase is the component of the respiratory chain that catalyzes the reduction of oxygen to water. Electrons originating from reduced cytochrome c in the intermembrane space (IMS) are transferred via the dinuclear copper A center (CU(A)) of subunit 2 and heme A of subunit 1 to the active site in subunit 1, a binuclear center (BNC) formed by heme A3 and copper B (CU(B)). The BNC reduces molecular oxygen to 2 water molecules using 4 electrons from cytochrome c in the IMS and 4 protons from the mitochondrial matrix. This is Cytochrome c oxidase subunit 8A, mitochondrial (COX8A) from Hylobates agilis (Agile gibbon).